A 488-amino-acid polypeptide reads, in one-letter code: Probable malate:quinone oxidoreductase (488 aa).

Belongs to the MQO family. It depends on FAD as a cofactor.

The enzyme catalyses (S)-malate + a quinone = a quinol + oxaloacetate. Its pathway is carbohydrate metabolism; tricarboxylic acid cycle; oxaloacetate from (S)-malate (quinone route): step 1/1. This is Probable malate:quinone oxidoreductase from Neisseria meningitidis serogroup C / serotype 2a (strain ATCC 700532 / DSM 15464 / FAM18).